A 185-amino-acid polypeptide reads, in one-letter code: Capsid protein (185 aa).

The interval 136–185 (NAPILSTLPETTVVRRRDRGRSPRRRTPSPRRRRSQSPRRRRSQSRESQC) is disordered. Residues 149–178 (VRRRDRGRSPRRRTPSPRRRRSQSPRRRRS) are compositionally biased toward basic residues. Phosphoserine; by host occurs at positions 157, 164, and 172. The 1; half-length repeat unit spans residues 157–163 (SPRRRTP). The 3 X 8 AA repeats of S-P-R-R-R-[PR]-S-Q stretch occupies residues 157 to 179 (SPRRRTPSPRRRRSQSPRRRRSQ). The Bipartite nuclear localization signal motif lies at 160-177 (RRTPSPRRRRSQSPRRRR). A run of 2 repeats spans residues 164 to 171 (SPRRRRSQ) and 172 to 179 (SPRRRRSQ). The segment at 179-185 (QSRESQC) is RNA binding.

Belongs to the orthohepadnavirus core antigen family. Homodimerizes, then multimerizes. Interacts with cytosol exposed regions of viral L glycoprotein present in the reticulum-to-Golgi compartment. Interacts with human FLNB. Phosphorylated form interacts with host importin alpha; this interaction depends on the exposure of the NLS, which itself depends upon genome maturation and/or phosphorylation of the capsid protein. Interacts with host NUP153. In terms of processing, phosphorylated by host SRPK1, SRPK2, and maybe protein kinase C or GAPDH. Phosphorylation is critical for pregenomic RNA packaging. Protein kinase C phosphorylation is stimulated by HBx protein and may play a role in transport of the viral genome to the nucleus at the late step during the viral replication cycle.

It is found in the virion. It localises to the host cytoplasm. Functionally, self assembles to form an icosahedral capsid. Most capsids appear to be large particles with an icosahedral symmetry of T=4 and consist of 240 copies of capsid protein, though a fraction forms smaller T=3 particles consisting of 180 capsid proteins. Entering capsids are transported along microtubules to the nucleus. Phosphorylation of the capsid is thought to induce exposure of nuclear localization signal in the C-terminal portion of the capsid protein that allows binding to the nuclear pore complex via the importin (karyopherin-) alpha and beta. Capsids are imported in intact form through the nuclear pore into the nuclear basket, where it probably binds NUP153. Only capsids that contain the mature viral genome can release the viral DNA and capsid protein into the nucleoplasm. Immature capsids get stuck in the basket. Capsids encapsulate the pre-genomic RNA and the P protein. Pre-genomic RNA is reverse-transcribed into DNA while the capsid is still in the cytoplasm. The capsid can then either be directed to the nucleus, providing more genomes for transcription, or bud through the endoplasmic reticulum to provide new virions. This is Capsid protein from Homo sapiens (Human).